A 158-amino-acid polypeptide reads, in one-letter code: Transcription elongation factor GreA (158 aa).

Residues 49 to 69 (SEYESAKDEQAFVEGRISQIE) adopt a coiled-coil conformation. A disordered region spans residues 102–125 (EEPESYTIVGESESDPLSGKISNE).

It belongs to the GreA/GreB family.

Necessary for efficient RNA polymerase transcription elongation past template-encoded arresting sites. The arresting sites in DNA have the property of trapping a certain fraction of elongating RNA polymerases that pass through, resulting in locked ternary complexes. Cleavage of the nascent transcript by cleavage factors such as GreA or GreB allows the resumption of elongation from the new 3'terminus. GreA releases sequences of 2 to 3 nucleotides. The sequence is that of Transcription elongation factor GreA from Limosilactobacillus fermentum (strain NBRC 3956 / LMG 18251) (Lactobacillus fermentum).